The sequence spans 352 residues: Glycerol-1-phosphate dehydrogenase [NAD(P)+] (352 aa).

NAD(+)-binding positions include 98–102 (GKAID) and 120–123 (TAAS). A substrate-binding site is contributed by Asp125. Ser129 is a binding site for NAD(+). Asp172 lines the substrate pocket. Zn(2+)-binding residues include Asp172 and His252. His256 lines the substrate pocket. His268 is a binding site for Zn(2+).

This sequence belongs to the glycerol-1-phosphate dehydrogenase family. The cofactor is Zn(2+).

The protein resides in the cytoplasm. The catalysed reaction is sn-glycerol 1-phosphate + NAD(+) = dihydroxyacetone phosphate + NADH + H(+). The enzyme catalyses sn-glycerol 1-phosphate + NADP(+) = dihydroxyacetone phosphate + NADPH + H(+). It functions in the pathway membrane lipid metabolism; glycerophospholipid metabolism. Functionally, catalyzes the NAD(P)H-dependent reduction of dihydroxyacetonephosphate (DHAP or glycerone phosphate) to glycerol 1-phosphate (G1P). The G1P thus generated is used as the glycerophosphate backbone of phospholipids in the cellular membranes of Archaea. This chain is Glycerol-1-phosphate dehydrogenase [NAD(P)+], found in Halobacterium salinarum (strain ATCC 29341 / DSM 671 / R1).